The sequence spans 266 residues: Lectin 7 (266 aa).

A signal peptide spans 1 to 27 (MAINTSRTQILFITIISFLILAQNVNS). Residues Asn-121, Asn-205, and Asn-219 are each glycosylated (N-linked (GlcNAc...) asparagine).

This sequence belongs to the leguminous lectin family.

Functionally, may be involved in arbuscular mycorrhizal (AM) symbiosis with AM fungi. The chain is Lectin 7 from Medicago truncatula (Barrel medic).